A 6874-amino-acid polypeptide reads, in one-letter code: Nesprin-2 (6874 aa).

An actin-binding region spans residues 1 to 286 (MAASPVLPTE…MTYVAQFLKY (286 aa)). Residues 1–6823 (MAASPVLPTE…RRSFLSRVIR (6823 aa)) are Cytoplasmic-facing. Calponin-homology (CH) domains follow at residues 31–136 (DTQK…LHFH) and 183–288 (WSAK…KYSK). 4 Spectrin repeats span residues 299 to 380 (AKVR…HQVA), 381 to 474 (AWRA…RINN), 475 to 577 (VLGK…QYIH), and 578 to 680 (NTKA…IQDQ). Residues 299-6767 (AKVRDALVWL…PDASLTSFDE (6469 aa)) are a coiled coil. The interval 675–723 (VKIQDQPPGNSSGTSLSKESAMAAEPGGSRGEDVKAAEKQEVEDEESAG) is disordered. Positions 681–692 (PPGNSSGTSLSK) are enriched in polar residues. The span at 704–714 (RGEDVKAAEKQ) shows a compositional bias: basic and acidic residues. Spectrin repeat units follow at residues 727–834 (VNEE…KNLS), 835–928 (DEPL…LRHE), 929–1030 (ISLY…KCAS), 1120–1211 (TQRG…LLNT), 1262–1322 (DIRD…DALD), 1323–1409 (ALEG…QSKE), 1410–1514 (EGPP…ASVT), 1515–1626 (ESLE…KTEE), 1627–1728 (YGEN…AGGS), 1729–1820 (NSYA…TKKN), 1821–1928 (ALQD…AGEL), 1929–2026 (NNSF…EEED), 2027–2122 (KLPA…LANT), 2123–2233 (YLSH…SVQK), 2234–2350 (LEGH…LNSI), 2422–2503 (DERE…TLKK), 2504–2610 (TKER…KCFQ), 2611–2707 (QATE…EALE), 2708–2821 (PLNR…QLEL), 2822–2923 (KLEE…FLQN), 2924–3027 (NGSE…GKIK), 3028–3133 (QLDT…NMLL), 3134–3239 (ELQP…SLRA), 3240–3343 (DVLN…AQEA), 3344–3456 (EEER…QWGG), 3457–3563 (ELKR…TTRK), 3564–3669 (NKDL…SSEV), 3670–3767 (SKSS…ESRT), 3768–3870 (SQLN…QIME), 3871–3976 (ALPH…VTQE), and 3977–4074 (QNEL…KPSA). Positions 2338–2397 (SAKQETENGLNSILKSKSSTEKHVKFSLPVEEMPATSEVPKPTRESAAVGESGGARETNT) are disordered. The span at 2344 to 2354 (ENGLNSILKSK) shows a compositional bias: polar residues. Disordered stretches follow at residues 4062–4152 (KQEQ…ATIV), 4171–4193 (APDS…TDEG), 4326–4348 (FSED…DQPA), and 4401–4429 (HQEN…DSTL). A compositionally biased stretch (basic and acidic residues) spans 4081 to 4091 (VAERDASERKL). Residue S4096 is modified to Phosphoserine. Residues 4110 to 4122 (SSVKSEDGRRRTE) show a composition bias toward basic and acidic residues. A Spectrin 36 repeat occupies 4218–4337 (RSRPRPADIL…EDQHPSTLKK (120 aa)). The span at 4326 to 4345 (FSEDQHPSTLKKPSEPHDVD) shows a compositional bias: basic and acidic residues. The span at 4409-4429 (RQSASSSKVPSPGNAASDSTL) shows a compositional bias: polar residues. 17 Spectrin repeats span residues 4507–4626 (SMTE…RSYQ), 4627–4714 (NEVK…RARY), 4715–4823 (LELS…QSML), 4824–4929 (QKWE…QTLL), 4930–5037 (KHLL…QEKL), 5038–5150 (HQLQ…KIQH), 5151–5252 (LEQL…SQVH), 5253–5377 (QLRA…KAPH), 5378–5473 (NAHA…MLLA), 5474–5576 (KSNE…YSEL), 5577–5691 (QGNG…QWRF), 5692–5786 (FTTS…LSLG), 5787–5894 (EVIS…RVAI), 5895–6004 (RKQE…VKKL), 6005–6122 (KETF…EETW), 6123–6230 (RLWQ…LRYF), and 6231–6342 (TNQR…PGLD). Positions 5435–5459 (NSTLSDQLPQPEERSTPGLHSGQRH) are disordered. The residue at position 5772 (S5772) is a Phosphoserine. Positions 6336–6473 (SHTPGLDDEK…TEAPVPTDAS (138 aa)) are disordered. Over residues 6341 to 6354 (LDDEKEASENETDI) the composition is skewed to acidic residues. A phosphoserine mark is found at S6348, S6371, S6400, S6417, S6418, S6419, and S6448. Over residues 6355–6372 (EDPREIQADSWRKRRESE) the composition is skewed to basic and acidic residues. Spectrin repeat units lie at residues 6450-6534 (SHSK…KLRL), 6535-6650 (KQTV…QCQD), and 6651-6767 (FHQL…SFDE). A disordered region spans residues 6790 to 6812 (EEEEEEEETDSRMPHLDSPGSSQ). In terms of domain architecture, KASH spans 6815–6874 (RSFLSRVIRAALPLQLLLLLLLLLACLLPASEDDYSCTQANNFARSFYPMLRYTNGPPPT). A helical; Anchor for type IV membrane protein membrane pass occupies residues 6824-6844 (AALPLQLLLLLLLLLACLLPA). Residues 6845-6874 (SEDDYSCTQANNFARSFYPMLRYTNGPPPT) are Perinuclear space-facing. Positions 6861–6874 (FYPMLRYTNGPPPT) are sufficient for interaction with SUN2.

The protein belongs to the nesprin family. Core component of LINC complexes which are composed of inner nuclear membrane SUN domain-containing proteins coupled to outer nuclear membrane KASH domain-containing nesprins. SUN and KASH domain-containing proteins seem to bind each other promiscuously; however, some LINC complex constituents are tissue- or cell type-specific. At least SUN1/2-containing core LINC complexes are proposed to be hexameric composed of three protomers of each KASH and SUN domain-containing protein. The SUN2:SYNE2/KASH2 complex is a heterohexamer; the homotrimeric cloverleave-like conformation of the SUN domain is a prerequisite for LINC complex formation in which three separate SYNE2/KASH2 peptides bind at the interface of adjacent SUN domains. Interacts with EMD, LMNA, MKS3 and F-actin via its N-terminal domain. Interacts with DCTN1 and DYNC1I1/2; suggesting the association with the dynein-dynactin motor complex. Associates with kinesin motor complexes. Interacts with TMEM67. Interacts (via KASH domain) with TMEM258. Interacts with BROX; this interaction promotes SYN2 ubiquitination and facilitates the relaxation of mechanical stress imposed by compressive actin fibers at the rupture site. Post-translationally, the disulfid bond with SUN2 is required for stability of the SUN2:SYNE2/KASH2 LINC complex under tensile forces though not required for the interaction. C-terminal isoforms are highly expressed in the brain, hert and skeletal muscle. Isoform 1 (Nesprin-2 Giant) is most prevalent in the brain, skin, kidney and skeletal muscle.

Its subcellular location is the nucleus outer membrane. The protein localises to the sarcoplasmic reticulum membrane. The protein resides in the cell membrane. It is found in the cytoplasm. It localises to the cytoskeleton. Its subcellular location is the mitochondrion. The protein localises to the nucleus. The protein resides in the nucleoplasm. Its function is as follows. Multi-isomeric modular protein which forms a linking network between organelles and the actin cytoskeleton to maintain the subcellular spatial organization. As a component of the LINC (LInker of Nucleoskeleton and Cytoskeleton) complex involved in the connection between the nuclear lamina and the cytoskeleton. The nucleocytoplasmic interactions established by the LINC complex play an important role in the transmission of mechanical forces across the nuclear envelope and in nuclear movement and positioning. Specifically, SYNE2 and SUN2 assemble in arrays of transmembrane actin-associated nuclear (TAN) lines which are bound to F-actin cables and couple the nucleus to retrograde actin flow during actin-dependent nuclear movement. May be involved in nucleus-centrosome attachment. During interkinetic nuclear migration (INM) at G2 phase and nuclear migration in neural progenitors its LINC complex association with SUN1/2 and probable association with cytoplasmic dynein-dynactin motor complexes functions to pull the nucleus toward the centrosome; SYNE1 and SYNE2 seem to act redundantly in cerebellum, midbrain, brain stem, and other brain regions except cerebral cortex and hippocampus. During INM at G1 phase mediates respective LINC complex association with kinesin to push the nucleus away from the centrosome. Involved in nuclear migration in retinal photoreceptor progenitors. Required for centrosome migration to the apical cell surface during early ciliogenesis. The chain is Nesprin-2 from Mus musculus (Mouse).